The chain runs to 464 residues: UDP-N-acetylmuramate--L-alanine ligase (464 aa).

Residue 115–121 (GSHGKTT) coordinates ATP.

The protein belongs to the MurCDEF family.

The protein localises to the cytoplasm. It carries out the reaction UDP-N-acetyl-alpha-D-muramate + L-alanine + ATP = UDP-N-acetyl-alpha-D-muramoyl-L-alanine + ADP + phosphate + H(+). It participates in cell wall biogenesis; peptidoglycan biosynthesis. Its function is as follows. Cell wall formation. This is UDP-N-acetylmuramate--L-alanine ligase from Pelagibacter ubique (strain HTCC1062).